We begin with the raw amino-acid sequence, 524 residues long: MATVEELYRSYGILADAKDDVGQHKSAYQVIIDGVKGGAKEKRLAAQFIPKFFKHFPDLSDSALNAQLDLCEDEDVSIRRQAIKELSQFATGENLPRVADILTQLLQSDDSAEFNLVNNALLSIFKMDAKGTLGGLFSQILQGEDIVRERAIKFLATKMKTLPEETLTKEVDDYIFSESKKVLYDVTGEEFVLFMKILSALKNLQTVSGRQQLVDLVSEQAGLHQTLNPADPDSVDRLLQCMRQAVPLFSKNVHSTKFVTYFCEQVLPILSTLTSPAESIDVQLEVLKLLAEMSSFCGDMDKLESNLNKLFDKLLEFMPLPPEEVENGDTAANEEPKLQFSYVECLLFSFHQLGRKLPDFLIAKVDAEKLKDFKIRLQYFARGLQVYIRQLRLALQGKSGDALKTEENKIKVVALKITNNINVLIKDLFHNPPSYKSTVTLSWKPVQRTPDSGQKRTSDETSSTSPPKKPIVGPKRDSRQIYNPPSGKYSASVGAFSYEQRGGFQGGRGRGWGGRGNRSRGRIY.

The interval 1–360 is ARM-like and Heat-like helical repeats; sequence MATVEELYRS…HQLGRKLPDF (360 aa). Residues 440 to 524 are disordered; that stretch reads TLSWKPVQRT…RGNRSRGRIY (85 aa). Residues 455-476 carry the Nuclear localization signal motif; the sequence is KRTSDETSSTSPPKKPIVGPKR. Residues 503–516 show a composition bias toward gly residues; it reads GFQGGRGRGWGGRG.

Belongs to the API5 family. As to quaternary structure, monomer.

It is found in the nucleus. Functionally, may be an antiapoptotic factor. The sequence is that of Apoptosis inhibitor 5-A (api5-a) from Xenopus laevis (African clawed frog).